The following is a 322-amino-acid chain: AA9 family lytic polysaccharide monooxygenase A (322 aa).

Residues 1 to 15 (MKVLSLLAAASAASA) form the signal peptide. The Cu(2+) site is built by histidine 16 and histidine 96. 2 disulfide bridges follow: cysteine 54-cysteine 182 and cysteine 152-cysteine 237. O2 contacts are provided by histidine 168 and glutamine 177. 2 O-linked (Man...) threonine glycosylation sites follow: threonine 228 and threonine 236. Residues 286–322 (CTAAQWAQCGGMGFSGCTTCASPYTCKKMNDYYSQCS) enclose the CBM1 domain.

It belongs to the polysaccharide monooxygenase AA9 family. Requires Cu(2+) as cofactor.

It localises to the secreted. The catalysed reaction is [(1-&gt;4)-beta-D-glucosyl]n+m + reduced acceptor + O2 = 4-dehydro-beta-D-glucosyl-[(1-&gt;4)-beta-D-glucosyl]n-1 + [(1-&gt;4)-beta-D-glucosyl]m + acceptor + H2O.. In terms of biological role, lytic polysaccharide monooxygenase (LPMO) that depolymerizes crystalline and amorphous polysaccharides via the oxidation of scissile alpha- or beta-(1-4)-glycosidic bonds, yielding C4 oxidation products. Catalysis by LPMOs requires the reduction of the active-site copper from Cu(II) to Cu(I) by a reducing agent and H(2)O(2) or O(2) as a cosubstrate. Active on tamarind xyloglucan and konjac glucomannan. The chain is AA9 family lytic polysaccharide monooxygenase A (gh61-1) from Neurospora crassa (strain ATCC 24698 / 74-OR23-1A / CBS 708.71 / DSM 1257 / FGSC 987).